A 297-amino-acid polypeptide reads, in one-letter code: Protease HtpX homolog (297 aa).

2 helical membrane passes run 5 to 25 (IFLF…VLSI) and 44 to 64 (IVAL…MSLL). H155 serves as a coordination point for Zn(2+). Residue E156 is part of the active site. H159 serves as a coordination point for Zn(2+). Helical transmembrane passes span 170–190 (LLQG…AWAV) and 204–224 (FIAV…VVFA). A Zn(2+)-binding site is contributed by E230.

The protein belongs to the peptidase M48B family. Zn(2+) serves as cofactor.

It is found in the cell membrane. The protein is Protease HtpX homolog of Bacillus licheniformis (strain ATCC 14580 / DSM 13 / JCM 2505 / CCUG 7422 / NBRC 12200 / NCIMB 9375 / NCTC 10341 / NRRL NRS-1264 / Gibson 46).